We begin with the raw amino-acid sequence, 249 residues long: MSGTILITGATSGFGQATAQRFVKEGWKVIGTGRRAERLEALSAELGSAFHGVAFDITDEEATKKALAGLPDGFRDIDILVNNAGLALGTAPAPQVPLKDWQTMVDTNITGLLNVTHHLLPTLIERKGIVINLSSVAAHYPYLGGNVYGGTKAFLRQFSLGLRSDLHGKGVRVTSIEPGMCETEFTLVRTGGNQEASDNLYKGVNPITADDIANTIHWVASQPKHININSLELMPVNQSFAGFQVYRES.

6-30 contacts NADP(+); the sequence is LITGATSGFGQATAQRFVKEGWKVI. Ser-135 provides a ligand contact to substrate. Residue Tyr-148 is the Proton acceptor of the active site.

This sequence belongs to the short-chain dehydrogenases/reductases (SDR) family. In terms of assembly, homotetramer.

The enzyme catalyses L-serine + NADP(+) = aminoacetaldehyde + CO2 + NADPH. In terms of biological role, catalyzes the oxidation of the hydroxyl group of serine to form 2-aminomalonate semialdehyde which is spontaneously converted into 2-aminoacetaldehyde and CO(2). Also acts on D-serine, L-glycerate, D-glycerate and 2-methyl-DL-serine. Does not act on O-methyl-DL-serine and L-threonine. The protein is Serine 3-dehydrogenase (sdh) of Rhizobium radiobacter (Agrobacterium tumefaciens).